The following is a 156-amino-acid chain: MPRRRVVGQRKILPDPKFNSELLAKFINVIMQDGKKSTAEKIIYKALDTASEKKGEDHLVILEAALDNVRPSVEVKSRRVGGSTYQVPCEVRPVRRNALAMRWLVEAARKRGEKSMALRLAGEMLDASENKGTAVKKREDVHRMAEANKAFAHYRW.

This sequence belongs to the universal ribosomal protein uS7 family. In terms of assembly, part of the 30S ribosomal subunit. Contacts proteins S9 and S11.

In terms of biological role, one of the primary rRNA binding proteins, it binds directly to 16S rRNA where it nucleates assembly of the head domain of the 30S subunit. Is located at the subunit interface close to the decoding center, probably blocks exit of the E-site tRNA. This Shewanella piezotolerans (strain WP3 / JCM 13877) protein is Small ribosomal subunit protein uS7.